The sequence spans 500 residues: MLNVNFVNEESSTNQGLVVFIDEQLKLDSNLIGLDQQHHGLISKTIQNKLQFTGKYGQIKVIPSVIKSGEVRYLIIAGLGNEEKLTEAKIEELGGKILQHATGCKISTIGLKLTNRISRFTSQTFASLVASGAFLASYRFDKYRTTLKEAEKFAVESIEIFTDNSTETAKLFEIKKLIAEAVFFTRDISNEPSNIKTPQVYAERIVDRLEPLGVDVDVIGEREMKNLGMGALLGVGQGSQNESKLVVMEYKGGSKDAPTIALVGKGVIFDTGGISLKPSSDMHLMRYDMGGSAAVVGTIIAVAGQKLPINIVGVVGLVENMPSGNAQRPGDVVTTMSGQTAEVLNTDAEGRLVLADAVWYAQEKFKPKCVIDVATLTGAITIALGNTYAGCFSNNDELADKLIKVGEEVNEKLWRMPLHDEYDAMINSDIADMANIGNVPRAAGSCIAAHFIKRFIKDGVDWAHLDIAGVANSNKASALGPKGAVGYGVRLLEKFIKEYT.

Positions 265 and 270 each coordinate Mn(2+). K277 is an active-site residue. Positions 288, 347, and 349 each coordinate Mn(2+). R351 is a catalytic residue.

The protein belongs to the peptidase M17 family. The cofactor is Mn(2+).

It localises to the cytoplasm. The enzyme catalyses Release of an N-terminal amino acid, Xaa-|-Yaa-, in which Xaa is preferably Leu, but may be other amino acids including Pro although not Arg or Lys, and Yaa may be Pro. Amino acid amides and methyl esters are also readily hydrolyzed, but rates on arylamides are exceedingly low.. The catalysed reaction is Release of an N-terminal amino acid, preferentially leucine, but not glutamic or aspartic acids.. In terms of biological role, presumably involved in the processing and regular turnover of intracellular proteins. Catalyzes the removal of unsubstituted N-terminal amino acids from various peptides. The chain is Probable cytosol aminopeptidase from Rickettsia africae (strain ESF-5).